Here is a 454-residue protein sequence, read N- to C-terminus: Bifunctional protein GlmU (454 aa).

The pyrophosphorylase stretch occupies residues 1-226 (MALNVVILAA…AVEVEGANNR (226 aa)). UDP-N-acetyl-alpha-D-glucosamine contacts are provided by residues 8–11 (LAAG), lysine 22, glutamine 73, 78–79 (GT), 100–102 (YGD), glycine 137, glutamate 151, asparagine 166, and asparagine 224. Mg(2+) is bound at residue aspartate 102. Asparagine 224 lines the Mg(2+) pocket. Positions 227–247 (VQLAQLERAYQARAAEKLMLE) are linker. The interval 248–454 (GANLRDPARI…GWPRPVKLKK (207 aa)) is N-acetyltransferase. Residues arginine 330 and lysine 348 each contribute to the UDP-N-acetyl-alpha-D-glucosamine site. Histidine 360 functions as the Proton acceptor in the catalytic mechanism. Residues tyrosine 363 and asparagine 374 each coordinate UDP-N-acetyl-alpha-D-glucosamine. Residues alanine 377, 383–384 (NY), serine 402, alanine 420, and arginine 437 contribute to the acetyl-CoA site.

It in the N-terminal section; belongs to the N-acetylglucosamine-1-phosphate uridyltransferase family. The protein in the C-terminal section; belongs to the transferase hexapeptide repeat family. Homotrimer. Mg(2+) is required as a cofactor.

It is found in the cytoplasm. It carries out the reaction alpha-D-glucosamine 1-phosphate + acetyl-CoA = N-acetyl-alpha-D-glucosamine 1-phosphate + CoA + H(+). The enzyme catalyses N-acetyl-alpha-D-glucosamine 1-phosphate + UTP + H(+) = UDP-N-acetyl-alpha-D-glucosamine + diphosphate. It functions in the pathway nucleotide-sugar biosynthesis; UDP-N-acetyl-alpha-D-glucosamine biosynthesis; N-acetyl-alpha-D-glucosamine 1-phosphate from alpha-D-glucosamine 6-phosphate (route II): step 2/2. The protein operates within nucleotide-sugar biosynthesis; UDP-N-acetyl-alpha-D-glucosamine biosynthesis; UDP-N-acetyl-alpha-D-glucosamine from N-acetyl-alpha-D-glucosamine 1-phosphate: step 1/1. It participates in bacterial outer membrane biogenesis; LPS lipid A biosynthesis. Its function is as follows. Catalyzes the last two sequential reactions in the de novo biosynthetic pathway for UDP-N-acetylglucosamine (UDP-GlcNAc). The C-terminal domain catalyzes the transfer of acetyl group from acetyl coenzyme A to glucosamine-1-phosphate (GlcN-1-P) to produce N-acetylglucosamine-1-phosphate (GlcNAc-1-P), which is converted into UDP-GlcNAc by the transfer of uridine 5-monophosphate (from uridine 5-triphosphate), a reaction catalyzed by the N-terminal domain. The chain is Bifunctional protein GlmU from Shewanella pealeana (strain ATCC 700345 / ANG-SQ1).